A 245-amino-acid polypeptide reads, in one-letter code: 8-amino-3,8-dideoxy-manno-octulosonate cytidylyltransferase (245 aa).

It belongs to the KdsB family.

It is found in the cytoplasm. It catalyses the reaction 8-amino-3,8-dideoxy-alpha-D-manno-octulosonate + CTP = CMP-8-amino-3,8-dideoxy-alpha-D-manno-oct-2-ulosonate + diphosphate. It functions in the pathway bacterial outer membrane biogenesis; lipopolysaccharide biosynthesis. In terms of biological role, activates KDO8N (a required 8-carbon sugar) for incorporation into bacterial lipopolysaccharide in the Shewanella genus. This Shewanella baltica (strain OS195) protein is 8-amino-3,8-dideoxy-manno-octulosonate cytidylyltransferase.